A 302-amino-acid chain; its full sequence is Sulfate adenylyltransferase subunit 2 (302 aa).

Belongs to the PAPS reductase family. CysD subfamily. As to quaternary structure, heterodimer composed of CysD, the smaller subunit, and CysN.

It carries out the reaction sulfate + ATP + H(+) = adenosine 5'-phosphosulfate + diphosphate. It functions in the pathway sulfur metabolism; hydrogen sulfide biosynthesis; sulfite from sulfate: step 1/3. Its function is as follows. With CysN forms the ATP sulfurylase (ATPS) that catalyzes the adenylation of sulfate producing adenosine 5'-phosphosulfate (APS) and diphosphate, the first enzymatic step in sulfur assimilation pathway. APS synthesis involves the formation of a high-energy phosphoric-sulfuric acid anhydride bond driven by GTP hydrolysis by CysN coupled to ATP hydrolysis by CysD. The chain is Sulfate adenylyltransferase subunit 2 from Aeromonas hydrophila subsp. hydrophila (strain ATCC 7966 / DSM 30187 / BCRC 13018 / CCUG 14551 / JCM 1027 / KCTC 2358 / NCIMB 9240 / NCTC 8049).